Reading from the N-terminus, the 272-residue chain is Shikimate dehydrogenase (NADP(+)) (272 aa).

Shikimate is bound by residues 19–21 (SLS) and Thr66. Lys70 functions as the Proton acceptor in the catalytic mechanism. Position 82 (Glu82) interacts with NADP(+). Asn91 and Asp106 together coordinate shikimate. NADP(+) is bound by residues 129–133 (GAGGA), 151–156 (NRTPEK), and Ile214. Tyr216 contributes to the shikimate binding site. Gly237 contributes to the NADP(+) binding site.

Belongs to the shikimate dehydrogenase family. As to quaternary structure, homodimer.

It carries out the reaction shikimate + NADP(+) = 3-dehydroshikimate + NADPH + H(+). It functions in the pathway metabolic intermediate biosynthesis; chorismate biosynthesis; chorismate from D-erythrose 4-phosphate and phosphoenolpyruvate: step 4/7. Functionally, involved in the biosynthesis of the chorismate, which leads to the biosynthesis of aromatic amino acids. Catalyzes the reversible NADPH linked reduction of 3-dehydroshikimate (DHSA) to yield shikimate (SA). In Thermococcus kodakarensis (strain ATCC BAA-918 / JCM 12380 / KOD1) (Pyrococcus kodakaraensis (strain KOD1)), this protein is Shikimate dehydrogenase (NADP(+)).